Consider the following 145-residue polypeptide: Putative antiporter subunit mnhG2 (145 aa).

3 consecutive transmembrane segments (helical) span residues 11 to 31 (IAAV…IGIV), 51 to 71 (VLLT…FFSV), and 72 to 92 (RLLL…HLVA).

Belongs to the CPA3 antiporters (TC 2.A.63) subunit G family. As to quaternary structure, may form a heterooligomeric complex that consists of seven subunits: mnhA2, mnhB2, mnhC2, mnhD2, mnhE2, mnhF2 and mnhG2.

The protein resides in the cell membrane. In Staphylococcus aureus (strain MRSA252), this protein is Putative antiporter subunit mnhG2 (mnhG2).